A 320-amino-acid chain; its full sequence is MDLSAIYESLMSMSHDLSPDHGGTESSGGLWNINSSDSIPSGVTSRLTGRSTSLVEGRSCSWVPPPPGFAPLAPRPGPELSPSPTSPTATPTTSSRYKTELCRTYSESGRCRYGAKCQFAHGPGELRQANRHPKYKTELCHKFYLQGRCPYGSRCHFIHNPTEDLALPGQPHVLRQSISFSGLPSGRRTSPPPPGFSGPSLSSCSFSPSSSPPPPGDLPLSPSAFSAAPGTPVSRRDPTPACCPSCRRSTTPSTIWGPLGGLARSPSAHSLGSDPDDYASSGSSLGGSDSPVFEAGVFGPPQPPAPPRRLPIFNRISVSE.

Residues 1–15 are necessary for nuclear export; that stretch reads MDLSAIYESLMSMSH. The interval 1-93 is necessary and sufficient for the association with mRNA decay enzymes and mRNA decay activation; the sequence is MDLSAIYESL…PTSPTATPTT (93 aa). Necessary for localization of ARE-containing mRNAs to processing bodies (PBs) stretches follow at residues 1–167 and 93–320; these read MDLS…DLAL and TSSR…SVSE. Residues 17-50 form a disordered region; the sequence is LSPDHGGTESSGGLWNINSSDSIPSGVTSRLTGR. Residues 27 to 50 are compositionally biased toward polar residues; the sequence is SGGLWNINSSDSIPSGVTSRLTGR. Serine 53 carries the post-translational modification Phosphoserine; by MAPKAPK2. Residue serine 59 is modified to Phosphoserine. A P-P-P-P-G repeat occupies 64-68; it reads PPPPG. A compositionally biased stretch (pro residues) spans 66–85; it reads PPGFAPLAPRPGPELSPSPT. Residues 66-95 form a disordered region; it reads PPGFAPLAPRPGPELSPSPTSPTATPTTSS. Phosphoserine is present on residues serine 81 and serine 83. Threonine 85 carries the post-translational modification Phosphothreonine. At serine 86 the chain carries Phosphoserine. The segment covering 86 to 95 has biased composition (low complexity); that stretch reads SPTATPTTSS. The tract at residues 88-161 is necessary for nuclear localization; sequence TATPTTSSRY…GSRCHFIHNP (74 aa). The segment at 90 to 166 is necessary for RNA-binding; that stretch reads TPTTSSRYKT…FIHNPTEDLA (77 aa). 2 C3H1-type zinc fingers span residues 96–124 and 134–162; these read RYKTELCRTYSESGRCRYGAKCQFAHGPG and KYKTELCHKFYLQGRCPYGSRCHFIHNPT. Positions 96–187 are necessary for interaction with PABPN1; that stretch reads RYKTELCRTY…ISFSGLPSGR (92 aa). A necessary for mRNA decay activation region spans residues 167–320; it reads LPGQPHVLRQ…PIFNRISVSE (154 aa). Serine 179 bears the Phosphoserine; by MAPKAPK2 mark. The disordered stretch occupies residues 180 to 310; that stretch reads FSGLPSGRRT…PQPPAPPRRL (131 aa). Serine 190 is modified (phosphoserine). The P-P-P-P-G repeat unit spans residues 191-195; that stretch reads PPPPG. The segment covering 197–209 has biased composition (low complexity); the sequence is SGPSLSSCSFSPS. Phosphoserine is present on serine 211. A P-P-P-P-G repeat occupies 212–216; sequence PPPPG. Phosphoserine; by MAPK1; in vitro is present on serine 221. Threonine 251 is subject to Phosphothreonine. 2 positions are modified to phosphoserine: serine 270 and serine 290. Residues 280–290 are compositionally biased toward low complexity; the sequence is SSGSSLGGSDS. Pro residues predominate over residues 300–309; the sequence is PPQPPAPPRR. The interval 306–320 is interaction with CNOT1; the sequence is PPRRLPIFNRISVSE. Phosphoserine is present on serine 317.

In terms of assembly, associates with cytoplasmic CCR4-NOT and PAN2-PAN3 deadenylase complexes to trigger ARE-containing mRNA deadenylation and decay processes. Part of a mRNA decay activation complex at least composed of poly(A)-specific exoribonucleases CNOT6, EXOSC2 and XRN1 and mRNA-decapping enzymes DCP1A and DCP2. Associates with the RNA exosome complex. Interacts (via phosphorylated form) with 14-3-3 proteins; these interactions promote exclusion of ZFP36 from cytoplasmic stress granules in response to arsenite treatment in a MAPKAPK2-dependent manner and does not prevent CCR4-NOT deadenylase complex recruitment or ZFP36-induced ARE-containing mRNA deadenylation and decay processes. Interacts with 14-3-3 proteins; these interactions occur in response to rapamycin in an Akt-dependent manner. Interacts with AGO2 and AGO4. Interacts (via C-terminus) with CNOT1; this interaction occurs in a RNA-independent manner and induces mRNA deadenylation. Interacts (via N-terminus) with CNOT6. Interacts with CNOT6L. Interacts (via C-terminus) with CNOT7; this interaction occurs in a RNA-independent manner, induces mRNA deadenylation and is inhibited in a phosphorylation MAPKAPK2-dependent manner. Interacts (via unphosphorylated form) with CNOT8; this interaction occurs in a RNA-independent manner and is inhibited in a phosphorylation MAPKAPK2-dependent manner. Interacts with DCP1A. Interacts (via N-terminus) with DCP2. Interacts with EDC3. Interacts (via N-terminus) with EXOSC2. Interacts with heat shock 70 kDa proteins. Interacts with KHSRP; this interaction increases upon cytokine-induced treatment. Interacts with MAP3K4; this interaction enhances the association with SH3KBP1/CIN85. Interacts with MAPKAPK2; this interaction occurs upon skeletal muscle satellite cell activation. Interacts with NCL. Interacts with NUP214; this interaction increases upon lipopolysaccharide (LPS) stimulation. Interacts with PABPC1; this interaction occurs in a RNA-dependent manner. Interacts (via hypophosphorylated form) with PABPN1 (via RRM domain and C-terminal arginine-rich region); this interaction occurs in the nucleus in a RNA-independent manner, decreases in presence of single-stranded poly(A) RNA-oligomer and in a p38 MAPK-dependent-manner and inhibits nuclear poly(A) tail synthesis. Interacts with PAN2. Interacts (via C3H1-type zinc finger domains) with PKM. Interacts (via C3H1-type zinc finger domains) with nuclear RNA poly(A) polymerase. Interacts with PPP2CA; this interaction occurs in LPS-stimulated cells and induces ZFP36 dephosphorylation, and hence may promote ARE-containing mRNAs decay. Interacts (via C-terminus) with PRR5L (via C-terminus); this interaction may accelerate ZFP36-mediated mRNA decay during stress. Interacts (via C-terminus) with SFN; this interaction occurs in a phosphorylation-dependent manner. Interacts (via extreme C-terminal region) with SH3KBP1/CIN85 (via SH3 domains); this interaction enhances MAP3K4-induced phosphorylation of ZFP36 at Ser-59 and Ser-86 and does not alter neither ZFP36 binding to ARE-containing transcripts nor TNF-alpha mRNA decay. Interacts with XRN1. Interacts (via C-terminus and Ser-179 phosphorylated form) with YWHAB; this interaction occurs in a p38/MAPKAPK2-dependent manner, increases cytoplasmic localization of ZFP36 and protects ZFP36 from Ser-179 dephosphorylation by serine/threonine phosphatase 2A, and hence may be crucial for stabilizing ARE-containing mRNAs. Interacts (via phosphorylated form) with YWHAE. Interacts (via C-terminus) with YWHAG; this interaction occurs in a phosphorylation-dependent manner. Interacts with YWHAH; this interaction occurs in a phosphorylation-dependent manner. Interacts with YWHAQ; this interaction occurs in a phosphorylation-dependent manner. Interacts with (via C-terminus) YWHAZ; this interaction occurs in a phosphorylation-dependent manner. Does not interact with SH3KBP1. Interacts (via P-P-P-P-G repeats) with GIGYF2; the interaction is direct. In terms of processing, phosphorylated. Phosphorylation at serine and/or threonine residues occurs in a p38 MAPK- and MAPKAPK2-dependent manner. Phosphorylated by MAPKAPK2 at Ser-53 and Ser-179; phosphorylation increases its stability and cytoplasmic localization, promotes binding to 14-3-3 adapter proteins and inhibits the recruitment of cytoplasmic CCR4-NOT and PAN2-PAN3 deadenylase complexes to the mRNA decay machinery, thereby inhibiting ZFP36-induced ARE-containing mRNA deadenylation and decay processes. Phosphorylation by MAPKAPK2 does not impair ARE-containing RNA-binding. Phosphorylated in a MAPKAPK2- and p38 MAPK-dependent manner upon skeletal muscle satellite cell activation; this phosphorylation inhibits ZFP36-mediated mRNA decay activity, and hence stabilizes MYOD1 mRNA. Phosphorylated by MAPK1 upon mitogen stimulation. Phosphorylated at Ser-59 and Ser-86; these phosphorylations increase in a SH3KBP1-dependent manner. Phosphorylated at serine and threonine residues in a pyruvate kinase PKM- and p38 MAPK-dependent manner. Phosphorylation at Ser-53 may participate in the PKM-mediated degradation of ZFP36 in a p38 MAPK-dependent manner. Dephosphorylated by serine/threonine phosphatase 2A at Ser-179. Post-translationally, ubiquitinated; pyruvate kinase (PKM)-dependent ubiquitination leads to proteasomal degradation through a p38 MAPK signaling pathway.

The protein localises to the nucleus. Its subcellular location is the cytoplasm. It localises to the cytoplasmic granule. It is found in the P-body. Its function is as follows. Zinc-finger RNA-binding protein that destabilizes numerous cytoplasmic AU-rich element (ARE)-containing mRNA transcripts by promoting their poly(A) tail removal or deadenylation, and hence provide a mechanism for attenuating protein synthesis. Acts as an 3'-untranslated region (UTR) ARE mRNA-binding adapter protein to communicate signaling events to the mRNA decay machinery. Recruits deadenylase CNOT7 (and probably the CCR4-NOT complex) via association with CNOT1, and hence promotes ARE-mediated mRNA deadenylation. Also functions by recruiting components of the cytoplasmic RNA decay machinery to the bound ARE-containing mRNAs. Self regulates by destabilizing its own mRNA. Binds to 3'-UTR ARE of numerous mRNAs. Also binds to ARE of its own mRNA. Plays a role in anti-inflammatory responses; suppresses tumor necrosis factor (TNF)-alpha production by stimulating ARE-mediated TNF-alpha mRNA decay and several other inflammatory ARE-containing mRNAs in interferon (IFN)- and/or lipopolysaccharide (LPS)-induced macrophages. Also plays a role in the regulation of dendritic cell maturation at the post-transcriptional level, and hence operates as part of a negative feedback loop to limit the inflammatory response. Promotes ARE-mediated mRNA decay of hypoxia-inducible factor HIF1A mRNA during the response of endothelial cells to hypoxia. Positively regulates early adipogenesis of preadipocytes by promoting ARE-mediated mRNA decay of immediate early genes (IEGs). Negatively regulates hematopoietic/erythroid cell differentiation by promoting ARE-mediated mRNA decay of the transcription factor STAT5B mRNA. Plays a role in maintaining skeletal muscle satellite cell quiescence by promoting ARE-mediated mRNA decay of the myogenic determination factor MYOD1 mRNA. Also associates with and regulates the expression of non-ARE-containing target mRNAs at the post-transcriptional level, such as MHC class I mRNAs. Participates in association with argonaute RISC catalytic components in the ARE-mediated mRNA decay mechanism; assists microRNA (miRNA) targeting ARE-containing mRNAs. May also play a role in the regulation of cytoplasmic mRNA decapping; enhances decapping of ARE-containing RNAs, in vitro. Involved in the delivery of target ARE-mRNAs to processing bodies (PBs). In addition to its cytosolic mRNA-decay function, affects nuclear pre-mRNA processing. Negatively regulates nuclear poly(A)-binding protein PABPN1-stimulated polyadenylation activity on ARE-containing pre-mRNA during LPS-stimulated macrophages. Also involved in the regulation of stress granule (SG) and P-body (PB) formation and fusion. Plays a role in the regulation of keratinocyte proliferation, differentiation and apoptosis. Plays a role as a tumor suppressor by inhibiting cell proliferation in breast cancer cells. The protein is mRNA decay activator protein ZFP36 of Rattus norvegicus (Rat).